The sequence spans 294 residues: Acetylglutamate kinase (294 aa).

Substrate contacts are provided by residues 67–68 (GG), arginine 89, and asparagine 191.

Belongs to the acetylglutamate kinase family. ArgB subfamily.

Its subcellular location is the cytoplasm. The enzyme catalyses N-acetyl-L-glutamate + ATP = N-acetyl-L-glutamyl 5-phosphate + ADP. Its pathway is amino-acid biosynthesis; L-arginine biosynthesis; N(2)-acetyl-L-ornithine from L-glutamate: step 2/4. In terms of biological role, catalyzes the ATP-dependent phosphorylation of N-acetyl-L-glutamate. The protein is Acetylglutamate kinase of Methylobacillus flagellatus (strain ATCC 51484 / DSM 6875 / VKM B-1610 / KT).